We begin with the raw amino-acid sequence, 83 residues long: MSSGGLLLLLGLLTLWEILTPVSSKDHPEFCELPADSGPCRGILHAFYYHPVHRTCLEFIYGGCYGNANNFKTIDECKRTCAA.

Positions 1 to 24 (MSSGGLLLLLGLLTLWEILTPVSS) are cleaved as a signal peptide. The region spanning 31 to 81 (CELPADSGPCRGILHAFYYHPVHRTCLEFIYGGCYGNANNFKTIDECKRTC) is the BPTI/Kunitz inhibitor domain. Cystine bridges form between C31–C81, C40–C64, and C56–C77.

It belongs to the venom Kunitz-type family. Expressed by the venom gland.

The protein resides in the secreted. Its function is as follows. Serine protease inhibitor. In Tropidechis carinatus (Australian rough-scaled snake), this protein is Kunitz-type serine protease inhibitor carinatin-2.